The primary structure comprises 303 residues: Carboxypeptidase B (303 aa).

The region spanning 5-298 is the Peptidase M14 domain; sequence SYHDYDEINA…EGVKVVANFV (294 aa). Residues histidine 63 and glutamate 66 each coordinate Zn(2+). Residues 63–66, arginine 118, and 136–137 each bind substrate; these read HARE and NR. Histidine 189 lines the Zn(2+) pocket. Residues 190–191 and tyrosine 241 each bind substrate; that span reads SY. Glutamate 264 acts as the Proton donor/acceptor in catalysis.

Belongs to the peptidase M14 family. Requires Zn(2+) as cofactor.

It localises to the secreted. The catalysed reaction is Preferential release of a C-terminal lysine or arginine amino acid.. The polypeptide is Carboxypeptidase B (Astacus astacus (Noble crayfish)).